The chain runs to 201 residues: Ribonuclease HII (201 aa).

An RNase H type-2 domain is found at 15–201 (QRVAGVDEVG…FRPVRRFLEA (187 aa)). Residues Asp21, Glu22, and Asp113 each contribute to the a divalent metal cation site.

Belongs to the RNase HII family. Mn(2+) serves as cofactor. The cofactor is Mg(2+).

The protein resides in the cytoplasm. It catalyses the reaction Endonucleolytic cleavage to 5'-phosphomonoester.. Its function is as follows. Endonuclease that specifically degrades the RNA of RNA-DNA hybrids. This is Ribonuclease HII from Nitrosococcus oceani (strain ATCC 19707 / BCRC 17464 / JCM 30415 / NCIMB 11848 / C-107).